The following is a 552-amino-acid chain: uncharacterized protein (552 aa).

A disordered region spans residues 1 to 59 (MPLEKTNTHDSTATVEDQEATDNPMHLTQSRMLDLAGNPNRTTSRQSETLFPNGVDLNY). Polar residues predominate over residues 39-50 (PNRTTSRQSETL). Transmembrane regions (helical) follow at residues 116–136 (ITIV…VIAG), 158–178 (LMVV…EMIG), 181–201 (IVYL…ALAP), 203–223 (IACL…PLTL), 238–258 (GLAI…GPLV), 271–291 (WIFW…LPVP), 345–365 (ILVC…GYFF), 383–403 (GLMF…TPFL), 424–444 (LVGM…FAWT), 450–470 (IWIG…LFYF), 484–506 (CASA…PLFI), and 519–539 (FFLL…FYLF).

Belongs to the major facilitator superfamily.

It is found in the membrane. This is an uncharacterized protein from Schizosaccharomyces pombe (strain 972 / ATCC 24843) (Fission yeast).